Reading from the N-terminus, the 372-residue chain is MNVGGKFNEGILFLNFNQDFSCIAVGTPEGYKIFNSDPYTLYYSQSNGGAGLVEMLFSTSLVSIVGSGDGNTSQRRLLINNIKNNIPICDLNFVTAILSVKMNRKRIVVIMETKIHIYDINNMKLLETREIASNPKGLCALSPSNTNYIVYPASQNNGNILVMDVLTLETVNLIQAHKSQISALALSQDGTLLATASDKGTVIRVFALPYANKSLSFRRGSIPAIIHSMTFSLDGRYLCVSSDTGTIHIFKIDFSSSNSSSFHQAQPSSSPSGGMMGLNFGGLTSKMSSYLPEVISQVWEPSRDFAHIKIPPGIPSICALMQNNKTAMVLTADSLYMQYNFDESVGGELKLAKEFSLLMEPDLDNDVTAKIL.

WD repeat units lie at residues 176-216 (AHKS…KSLS) and 221-260 (SIPA…SNSS).

Belongs to the WD repeat PROPPIN family.

The protein resides in the preautophagosomal structure membrane. It localises to the vacuole membrane. Its function is as follows. May be involved in cytoplasm to vacuole transport and autophagy. The polypeptide is Autophagy-related protein 18 (atg18) (Dictyostelium discoideum (Social amoeba)).